A 372-amino-acid chain; its full sequence is MEEWRNFLDIKVINESSLVTVDNLSLQLDISSEKAQEYLNMFYQGNDFLYPIYLIHGQPIDDEINLEIDEESQPISNFPVLQYILCDKSSLQEKQSRLKSGYKTVIFALSSAPLSDFDELLPAVYEIREKDVLYKKEDADKYGFIFNENSVPRVLKKAPSTHSPQLSVPSKTSTIDKTDTRSTEKTKGKDIFSNARNQKGNSSRKNKKAPLENHKEKEPLLPKEEKLSEQAKRERDDLKNIMQLEDESVSTTSVHDSEDDNLDSNNFQLEIGTEAKSAAPDEPQEIIKSVSGGKRRGKRKVKKYATTKDEEGFLVTKEEEVWESFSEDENISTGTSNVVRNKPTTVNIATKKKNTAQSKPQQKSIMSFFGKK.

2 disordered regions span residues 156-264 and 352-372; these read KKAP…NLDS and KKNT…FGKK. Residues 160-173 show a composition bias toward polar residues; it reads STHSPQLSVPSKTS. Phosphoserine is present on Ser163. 2 stretches are compositionally biased toward basic and acidic residues: residues 174-190 and 209-239; these read TIDK…KGKD and APLE…DDLK. Residues 355–365 show a composition bias toward polar residues; the sequence is TAQSKPQQKSI.

In terms of assembly, heterotetramer that consist of the pol3, cdc1, cdc27 and cdm1 subunits. Cdc27 interacts with cdc1 and is required for dimerization of the tetramer.

Its subcellular location is the nucleus. This is DNA polymerase delta subunit 3 (cdc27) from Schizosaccharomyces pombe (strain 972 / ATCC 24843) (Fission yeast).